The primary structure comprises 621 residues: Complex I assembly factor ACAD9, mitochondrial (621 aa).

A mitochondrion-targeting transit peptide spans 1-37; that stretch reads MSGCGLFLRTTAAARACRGLVVSTANRRLLRTSPPVR. An N6-acetyllysine modification is found at Lys-41. Position 92 is an N6-succinyllysine (Lys-92). The active-site Proton acceptor is Glu-426. A Phosphothreonine modification is found at Thr-478. The residue at position 521 (Lys-521) is an N6-acetyllysine; alternate. Lys-521 carries the post-translational modification N6-succinyllysine; alternate.

It belongs to the acyl-CoA dehydrogenase family. As to quaternary structure, homodimer. Interacts with NDUFAF1 and ECSIT. Part of the mitochondrial complex I assembly/MCIA complex that comprises at least the core subunits TMEM126B, NDUFAF1, ECSIT and ACAD9 and complement subunits such as COA1 and TMEM186. Interacts with TMEM70 and TMEM242. It depends on FAD as a cofactor. As to expression, ubiquitously expressed in most normal human tissues and cancer cell lines with high level of expression in heart, skeletal muscles, brain, kidney and liver. In the cerebellum uniquely expressed in the granular layer (at protein level).

The protein resides in the mitochondrion inner membrane. It carries out the reaction eicosanoyl-CoA + oxidized [electron-transfer flavoprotein] + H(+) = (2E)-eicosenoyl-CoA + reduced [electron-transfer flavoprotein]. The enzyme catalyses octadecanoyl-CoA + oxidized [electron-transfer flavoprotein] + H(+) = (2E)-octadecenoyl-CoA + reduced [electron-transfer flavoprotein]. It catalyses the reaction oxidized [electron-transfer flavoprotein] + hexadecanoyl-CoA + H(+) = (2E)-hexadecenoyl-CoA + reduced [electron-transfer flavoprotein]. The catalysed reaction is decanoyl-CoA + oxidized [electron-transfer flavoprotein] + H(+) = (2E)-decenoyl-CoA + reduced [electron-transfer flavoprotein]. It carries out the reaction nonanoyl-CoA + oxidized [electron-transfer flavoprotein] + H(+) = (2E)-nonenoyl-CoA + reduced [electron-transfer flavoprotein]. The enzyme catalyses pentadecanoyl-CoA + oxidized [electron-transfer flavoprotein] + H(+) = (2E)-pentadecenoyl-CoA + reduced [electron-transfer flavoprotein]. It catalyses the reaction undecanoyl-CoA + oxidized [electron-transfer flavoprotein] + H(+) = trans-2-undecenoyl-CoA + reduced [electron-transfer flavoprotein]. The catalysed reaction is (9Z)-hexadecenoyl-CoA + oxidized [electron-transfer flavoprotein] + H(+) = (2E,9Z)-hexadecadienoyl-CoA + reduced [electron-transfer flavoprotein]. It carries out the reaction heptadecanoyl-CoA + oxidized [electron-transfer flavoprotein] + H(+) = trans-2-heptadecenoyl-CoA + reduced [electron-transfer flavoprotein]. The enzyme catalyses (9E)-octadecenoyl-CoA + oxidized [electron-transfer flavoprotein] + H(+) = (2E,9E)-octadecadienoyl-CoA + reduced [electron-transfer flavoprotein]. It catalyses the reaction oxidized [electron-transfer flavoprotein] + (9Z)-octadecenoyl-CoA + H(+) = (2E,9Z)-octadecadienoyl-CoA + reduced [electron-transfer flavoprotein]. The catalysed reaction is (9Z,12Z)-octadecadienoyl-CoA + oxidized [electron-transfer flavoprotein] + H(+) = (2E,9Z,12Z)-octadecatrienoyl-CoA + reduced [electron-transfer flavoprotein]. It carries out the reaction (4Z,7Z,10Z,13Z,16Z,19Z)-docosahexaenoyl-CoA + oxidized [electron-transfer flavoprotein] + H(+) = (2E,4Z,7Z,10Z,13Z,16Z,19Z)-docosaheptaenoyl-CoA + reduced [electron-transfer flavoprotein]. The enzyme catalyses tetradecanoyl-CoA + oxidized [electron-transfer flavoprotein] + H(+) = (2E)-tetradecenoyl-CoA + reduced [electron-transfer flavoprotein]. As part of the MCIA complex, primarily participates in the assembly of the mitochondrial complex I and therefore plays a role in oxidative phosphorylation. This moonlighting protein also has a dehydrogenase activity toward a broad range of substrates with greater specificity for long-chain unsaturated acyl-CoAs. However, in vivo, it does not seem to play a primary role in fatty acid oxidation. In addition, the function in complex I assembly is independent of the dehydrogenase activity of the protein. This Homo sapiens (Human) protein is Complex I assembly factor ACAD9, mitochondrial.